The sequence spans 730 residues: Elongation factor 2 (730 aa).

The tr-type G domain occupies 19–228 (QRIRNIGIVA…TGVSFKDVYD (210 aa)). Residues 28–35 (AHIDHGKT), 94–98 (DTPGH), and 148–151 (NKVD) contribute to the GTP site. The residue at position 596 (histidine 596) is a Diphthamide.

It belongs to the TRAFAC class translation factor GTPase superfamily. Classic translation factor GTPase family. EF-G/EF-2 subfamily.

It is found in the cytoplasm. In terms of biological role, catalyzes the GTP-dependent ribosomal translocation step during translation elongation. During this step, the ribosome changes from the pre-translocational (PRE) to the post-translocational (POST) state as the newly formed A-site-bound peptidyl-tRNA and P-site-bound deacylated tRNA move to the P and E sites, respectively. Catalyzes the coordinated movement of the two tRNA molecules, the mRNA and conformational changes in the ribosome. The polypeptide is Elongation factor 2 (Methanosarcina acetivorans (strain ATCC 35395 / DSM 2834 / JCM 12185 / C2A)).